Here is a 318-residue protein sequence, read N- to C-terminus: Pyrimidine-specific ribonucleoside hydrolase RihA (318 aa).

H240 is a catalytic residue.

Belongs to the IUNH family. RihA subfamily.

Its function is as follows. Hydrolyzes cytidine or uridine to ribose and cytosine or uracil, respectively. The protein is Pyrimidine-specific ribonucleoside hydrolase RihA of Shewanella oneidensis (strain ATCC 700550 / JCM 31522 / CIP 106686 / LMG 19005 / NCIMB 14063 / MR-1).